A 355-amino-acid polypeptide reads, in one-letter code: 3-dehydroquinate synthase (355 aa).

Residues 71–76, 105–109, 129–130, K142, K151, and 169–172 contribute to the NAD(+) site; these read EGEASK, GVVGD, TS, and TLKT. Zn(2+) is bound by residues E184, H246, and H263.

This sequence belongs to the sugar phosphate cyclases superfamily. Dehydroquinate synthase family. Co(2+) is required as a cofactor. Requires Zn(2+) as cofactor. It depends on NAD(+) as a cofactor.

The protein localises to the cytoplasm. It carries out the reaction 7-phospho-2-dehydro-3-deoxy-D-arabino-heptonate = 3-dehydroquinate + phosphate. It functions in the pathway metabolic intermediate biosynthesis; chorismate biosynthesis; chorismate from D-erythrose 4-phosphate and phosphoenolpyruvate: step 2/7. Catalyzes the conversion of 3-deoxy-D-arabino-heptulosonate 7-phosphate (DAHP) to dehydroquinate (DHQ). In Streptococcus suis (strain 98HAH33), this protein is 3-dehydroquinate synthase.